The chain runs to 413 residues: Large ribosomal subunit protein uL4 (413 aa).

The residue at position 2 (Ala-2) is an N-acetylalanine. The residue at position 14 (Lys-14) is an N6-acetyllysine. Arg-97 bears the Omega-N-methylarginine mark. Lys-106 bears the N6-acetyllysine mark. Lys-239 participates in a covalent cross-link: Glycyl lysine isopeptide (Lys-Gly) (interchain with G-Cter in SUMO2). An N6-acetyllysine modification is found at Lys-259. Thr-266 is subject to Phosphothreonine. 2 positions are modified to phosphoserine: Ser-290 and Ser-295. Position 300 is a citrulline (Arg-300). Lys-327 is covalently cross-linked (Glycyl lysine isopeptide (Lys-Gly) (interchain with G-Cter in SUMO2)). Lys-333 bears the N6-acetyllysine mark. The tract at residues 355 to 413 is disordered; that stretch reads AAALAAKSDPKEAPAKKKPVVGKKKKPVVGRKAAAAKKPAADKKAADKRAGPEDKKPAA. Lys-361 is subject to N6-acetyllysine; alternate. Lys-361 participates in a covalent cross-link: Glycyl lysine isopeptide (Lys-Gly) (interchain with G-Cter in SUMO1); alternate. The residue at position 362 (Ser-362) is a Phosphoserine. The segment covering 370–383 has biased composition (basic residues); sequence KKKPVVGKKKKPVV. Positions 393–413 are enriched in basic and acidic residues; the sequence is PAADKKAADKRAGPEDKKPAA.

The protein belongs to the universal ribosomal protein uL4 family. Component of the large ribosomal subunit. May bind IPO9 with low affinity. Interacts with RBM3. Post-translationally, citrullinated by PADI4.

Its subcellular location is the cytoplasm. Its function is as follows. Component of the large ribosomal subunit. The ribosome is a large ribonucleoprotein complex responsible for the synthesis of proteins in the cell. The polypeptide is Large ribosomal subunit protein uL4 (RPL4) (Oryctolagus cuniculus (Rabbit)).